The chain runs to 717 residues: Polyribonucleotide nucleotidyltransferase (717 aa).

Mg(2+) is bound by residues Asp-488 and Asp-494. The KH domain maps to 555–614; sequence PRIEVMNIPVDKIREVIGSGGKVIREIVEKTGAKINIEDDGTVKIASSSGKEIEAARKWI. Positions 624 to 692 constitute an S1 motif domain; it reads GQIYEGTVVK…ERGKVRLSMK (69 aa).

It belongs to the polyribonucleotide nucleotidyltransferase family. Mg(2+) serves as cofactor.

It localises to the cytoplasm. The enzyme catalyses RNA(n+1) + phosphate = RNA(n) + a ribonucleoside 5'-diphosphate. Its function is as follows. Involved in mRNA degradation. Catalyzes the phosphorolysis of single-stranded polyribonucleotides processively in the 3'- to 5'-direction. This chain is Polyribonucleotide nucleotidyltransferase, found in Sinorhizobium fredii (strain NBRC 101917 / NGR234).